The following is a 638-amino-acid chain: MPNITLPDGSVRSFDHPVTVSEVASSIGAGLAKAALAGKVDGRLVDLSYRIEADTPLAIVTEKGDEGLDVIRHSTAHLLAHAVKELFPEAQVTIGPVIENGFYYDFAYKRPFTPEDLEKIEKRMAELARREIPVSREVWPRDKAVEFFKSQGEHYKAEIIASIPQAEDVSLYRQGDFIDLCRGPHVPSTGKLKVFKLTKVAGAYWRGDSKNEMLQRIYGTAWAKKDDLENYLHMLEEAEKRDHRKLGRLLDLFHIQEEAPGMVFWHAKGWTLWQQVEQYMRRTILDNGYQEVKTPQIVDRSLWEKSGHWDMYSELMFTTQSEKRDYAVKPMNCPCHIQIFNQGLKSYRDLPLRMAEFGSCHRNEPSGALHGIMRVRNFVQDDAHIFCADEQVQTEAAAFIELLQKVYADFGFTEILIKLSTRPDKRVGTDDQWDAAEAALAAALDAQGLAYDLQPGEGAFYGPKIEFSLKDCLNRVWQCGTLQLDFNLPVRLGAEYVAEDNAKHYPVMLHRAILGSLERFIGILIEHYAGALPLWLAPVHAVVLNISEGQTDYATEVARRLKQAGFRVEADLRNEKINYKIREHSVHKLPYQIVIGEKEKAAGVVAVRARGGQDLGQMPLDTLIERWQREIEARSGSI.

Residues 1-61 form the TGS domain; that stretch reads MPNITLPDGS…EADTPLAIVT (61 aa). The interval 242-533 is catalytic; that stretch reads DHRKLGRLLD…LIEHYAGALP (292 aa). Cys-333, His-384, and His-510 together coordinate Zn(2+).

The protein belongs to the class-II aminoacyl-tRNA synthetase family. In terms of assembly, homodimer. The cofactor is Zn(2+).

It is found in the cytoplasm. It carries out the reaction tRNA(Thr) + L-threonine + ATP = L-threonyl-tRNA(Thr) + AMP + diphosphate + H(+). Catalyzes the attachment of threonine to tRNA(Thr) in a two-step reaction: L-threonine is first activated by ATP to form Thr-AMP and then transferred to the acceptor end of tRNA(Thr). Also edits incorrectly charged L-seryl-tRNA(Thr). The chain is Threonine--tRNA ligase from Aromatoleum aromaticum (strain DSM 19018 / LMG 30748 / EbN1) (Azoarcus sp. (strain EbN1)).